The chain runs to 378 residues: Pseudouridine kinase (378 aa).

Pseudouridine contacts are provided by residues aspartate 12, threonine 26, 37–41, valine 38, asparagine 137, and lysine 166; that span reads GVARN. Positions 181 and 237 each coordinate Mg(2+). Residues threonine 237, glycine 239, glycine 242, threonine 298, leucine 306, and glycine 310 each contribute to the ATP site. Residue aspartate 311 coordinates pseudouridine.

The protein belongs to the carbohydrate kinase PfkB family. Forms homodimers.

It is found in the peroxisome. It carries out the reaction pseudouridine + ATP = psi-UMP + ADP + H(+). Its function is as follows. Catalyzes the phosphorylation of pseudouridine to pseudouridine 5'-phosphate (PsiMP). Catalyzes the first step in a pseudouridine degradation pathway. Acts together with the pseudouridine 5'-phosphate glycosidase PUMY in the peroxisome to prevent toxic pseudouridine monophosphate accumulation. The protein is Pseudouridine kinase of Arabidopsis thaliana (Mouse-ear cress).